The following is a 356-amino-acid chain: Putative ankyrin repeat protein R599 (356 aa).

ANK repeat units follow at residues 111–143 (NDDILLCTAIINCSSECLLYLLDKGIPIDFCDN), 152–182 (RLEKYIYTTRKNKSSCDMLKIVIDRGGNVNT), 183–213 (HNYEPLYSAVNDNNFDKIKLLVENGANKLSD), 215–238 (KRKITNTNLEIFQYLIDNRVELEV), 239–266 (NFDDIFLQSIINDDSECMKLFIELGANI), and 267–298 (NSIPTLELTKIIINARHEILEILINYGLDINN).

This chain is Putative ankyrin repeat protein R599, found in Acanthamoeba polyphaga (Amoeba).